A 569-amino-acid chain; its full sequence is Urease subunit beta (569 aa).

In terms of domain architecture, Urease spans 131 to 569; the sequence is GGIDTHIHFI…LSLAQLYNLF (439 aa). 3 residues coordinate Ni(2+): His-136, His-138, and Lys-219. Lys-219 is modified (N6-carboxylysine). His-221 contributes to the substrate binding site. Residues His-248 and His-274 each contribute to the Ni(2+) site. His-322 (proton donor) is an active-site residue. Residue Asp-362 participates in Ni(2+) binding.

This sequence belongs to the metallo-dependent hydrolases superfamily. Urease alpha subunit family. In terms of assembly, heterohexamer of 3 UreA (alpha) and 3 UreB (beta) subunits. It depends on Ni cation as a cofactor. Post-translationally, carboxylation allows a single lysine to coordinate two nickel ions.

The protein resides in the cytoplasm. It carries out the reaction urea + 2 H2O + H(+) = hydrogencarbonate + 2 NH4(+). Its pathway is nitrogen metabolism; urea degradation; CO(2) and NH(3) from urea (urease route): step 1/1. The protein is Urease subunit beta of Helicobacter felis (strain ATCC 49179 / CCUG 28539 / NCTC 12436 / CS1).